A 486-amino-acid polypeptide reads, in one-letter code: Betaine aldehyde dehydrogenase (486 aa).

Residues threonine 23 and aspartate 90 each coordinate K(+). NAD(+) is bound at residue 147–149; the sequence is GAW. Lysine 159 functions as the Charge relay system in the catalytic mechanism. NAD(+) is bound by residues 173 to 176 and 226 to 229; these read KPSE and ESGT. Residue leucine 241 participates in K(+) binding. Glutamate 247 functions as the Proton acceptor in the catalytic mechanism. Glycine 249, cysteine 281, and glutamate 382 together coordinate NAD(+). Residue cysteine 281 is the Nucleophile of the active site. At cysteine 281 the chain carries Cysteine sulfenic acid (-SOH). 2 residues coordinate K(+): lysine 452 and glycine 455. Glutamate 459 functions as the Charge relay system in the catalytic mechanism.

This sequence belongs to the aldehyde dehydrogenase family. In terms of assembly, dimer of dimers. K(+) serves as cofactor.

The catalysed reaction is betaine aldehyde + NAD(+) + H2O = glycine betaine + NADH + 2 H(+). The protein operates within amine and polyamine biosynthesis; betaine biosynthesis via choline pathway; betaine from betaine aldehyde: step 1/1. Functionally, involved in the biosynthesis of the osmoprotectant glycine betaine. Catalyzes the irreversible oxidation of betaine aldehyde to the corresponding acid. The protein is Betaine aldehyde dehydrogenase of Vibrio campbellii (strain ATCC BAA-1116).